The primary structure comprises 932 residues: Adhesion G protein-coupled receptor E2 (932 aa).

A signal peptide spans methionine 1–threonine 15. The Extracellular portion of the chain corresponds to histidine 16–serine 652. 2 consecutive EGF-like domains span residues glycine 32–glutamine 69 and aspartate 81–glycine 119. Cystine bridges form between cysteine 36-cysteine 48, cysteine 42-cysteine 57, cysteine 85-cysteine 98, cysteine 92-cysteine 107, cysteine 137-cysteine 149, cysteine 143-cysteine 158, cysteine 160-cysteine 171, cysteine 177-cysteine 189, cysteine 183-cysteine 198, cysteine 226-cysteine 239, and cysteine 233-cysteine 248. Residues aspartate 133–glutamate 172 enclose the EGF-like 3; calcium-binding domain. N-linked (GlcNAc...) asparagine glycosylation is found at asparagine 148 and asparagine 167. Positions aspartate 173–glycine 210 constitute an EGF-like 4; calcium-binding domain. An EGF-like 5; calcium-binding domain is found at aspartate 222–glutamine 260. Residue asparagine 229 is glycosylated (N-linked (GlcNAc...) asparagine). N-linked (GlcNAc...) asparagine glycosylation is found at asparagine 269, asparagine 283, asparagine 309, asparagine 333, asparagine 344, asparagine 363, asparagine 405, asparagine 417, asparagine 474, and asparagine 499. An EGF-like 6; calcium-binding domain is found at aspartate 272–glutamine 307. Disulfide bonds link cysteine 276-cysteine 286 and cysteine 280-cysteine 295. Residues aspartate 319–aspartate 354 form the EGF-like 7; calcium-binding domain. Cystine bridges form between cysteine 323–cysteine 336 and cysteine 330–cysteine 345. Positions glutamate 482–threonine 643 constitute a GAIN-B domain. The short motif at arginine 507–aspartate 509 is the Cell attachment site element. 2 disulfide bridges follow: cysteine 596-cysteine 625 and cysteine 613-cysteine 627. The interval cysteine 596–threonine 643 is GPS. A helical membrane pass occupies residues tyrosine 653–phenylalanine 673. Over arginine 674–threonine 681 the chain is Cytoplasmic. A helical membrane pass occupies residues tyrosine 682–isoleucine 702. The Extracellular portion of the chain corresponds to aspartate 703–histidine 719. Asparagine 707 carries an N-linked (GlcNAc...) asparagine glycan. Residues tyrosine 720–valine 740 traverse the membrane as a helical segment. Over arginine 741–methionine 756 the chain is Cytoplasmic. A helical membrane pass occupies residues leucine 757–valine 777. At histidine 778 to glycine 795 the chain is on the extracellular side. The chain crosses the membrane as a helical span at residues phenylalanine 796–alanine 816. Residues tryptophan 817–glutamine 849 lie on the Cytoplasmic side of the membrane. Residues isoleucine 850 to isoleucine 870 form a helical membrane-spanning segment. Residues methionine 871–alanine 872 are Extracellular-facing. Residues tyrosine 873 to leucine 893 form a helical membrane-spanning segment. Over asparagine 894–glycine 932 the chain is Cytoplasmic.

Belongs to the G-protein coupled receptor 2 family. Adhesion G-protein coupled receptor (ADGR) subfamily.

The protein localises to the cell membrane. Orphan receptor involved in cell adhesion and probably in cell-cell interactions involved specifically cells of the immune system. May play a role in regulatory T-cells (Treg) development. In Rattus norvegicus (Rat), this protein is Adhesion G protein-coupled receptor E2 (Adgre1).